A 479-amino-acid chain; its full sequence is Sulfate adenylyltransferase subunit 1 (479 aa).

The 215-residue stretch at 25-239 (KSLLRFLTCG…EVLETVDIQR (215 aa)) folds into the tr-type G domain. The tract at residues 34–41 (GSVDDGKS) is G1. 34–41 (GSVDDGKS) contributes to the GTP binding site. The segment at 92–96 (GITID) is G2. Residues 113-116 (DTPG) are G3. GTP is bound by residues 113–117 (DTPGH) and 168–171 (NKMD). Residues 168–171 (NKMD) are G4. The interval 206–208 (SAL) is G5.

Belongs to the TRAFAC class translation factor GTPase superfamily. Classic translation factor GTPase family. CysN/NodQ subfamily. As to quaternary structure, heterodimer composed of CysD, the smaller subunit, and CysN.

It catalyses the reaction sulfate + ATP + H(+) = adenosine 5'-phosphosulfate + diphosphate. It functions in the pathway sulfur metabolism; hydrogen sulfide biosynthesis; sulfite from sulfate: step 1/3. In terms of biological role, with CysD forms the ATP sulfurylase (ATPS) that catalyzes the adenylation of sulfate producing adenosine 5'-phosphosulfate (APS) and diphosphate, the first enzymatic step in sulfur assimilation pathway. APS synthesis involves the formation of a high-energy phosphoric-sulfuric acid anhydride bond driven by GTP hydrolysis by CysN coupled to ATP hydrolysis by CysD. The chain is Sulfate adenylyltransferase subunit 1 from Salmonella gallinarum (strain 287/91 / NCTC 13346).